Reading from the N-terminus, the 199-residue chain is HTH-type transcriptional regulator BetI (199 aa).

The 61-residue stretch at 8-68 folds into the HTH tetR-type domain; it reads EIRKPQLVKA…ETMREILRQL (61 aa). Residues 31–50 constitute a DNA-binding region (H-T-H motif); it reads SISLISKEAGVSTGIINHYF.

The protein operates within amine and polyamine biosynthesis; betaine biosynthesis via choline pathway [regulation]. Functionally, repressor involved in the biosynthesis of the osmoprotectant glycine betaine. It represses transcription of the choline transporter BetT and the genes of BetAB involved in the synthesis of glycine betaine. The protein is HTH-type transcriptional regulator BetI of Vibrio campbellii (strain ATCC BAA-1116).